The following is a 313-amino-acid chain: NADH-ubiquinone oxidoreductase chain 1 (313 aa).

Transmembrane regions (helical) follow at residues 6 to 26, 31 to 51, 62 to 82, 84 to 104, 109 to 129, 142 to 162, 183 to 203, 216 to 235, 250 to 270, and 286 to 306; these read IIII…FVSL, ILAL…ILTP, FIIF…IITA, CIFL…DTGF, MLCV…CFLF, MFFS…IYSL, FYIA…LDGL, LVAG…YSVL, LCFG…FGFF, and AFIL…LFTT.

The protein belongs to the complex I subunit 1 family.

Its subcellular location is the mitochondrion inner membrane. The catalysed reaction is a ubiquinone + NADH + 5 H(+)(in) = a ubiquinol + NAD(+) + 4 H(+)(out). Functionally, core subunit of the mitochondrial membrane respiratory chain NADH dehydrogenase (Complex I) that is believed to belong to the minimal assembly required for catalysis. Complex I functions in the transfer of electrons from NADH to the respiratory chain. The immediate electron acceptor for the enzyme is believed to be ubiquinone. This Leishmania tarentolae (Sauroleishmania tarentolae) protein is NADH-ubiquinone oxidoreductase chain 1 (ND1).